A 225-amino-acid polypeptide reads, in one-letter code: C-reactive protein (225 aa).

Positions M1 to A19 are cleaved as a signal peptide. Q20 bears the Pyrrolidone carboxylic acid mark. The Pentraxin (PTX) domain occupies S24–P225. A disulfide bond links C55 and C116. N80, E157, Q158, D159, and Q169 together coordinate Ca(2+).

The protein belongs to the pentraxin family. In terms of assembly, homopentamer. Pentraxin (or pentaxin) have a discoid arrangement of 5 non-covalently bound subunits. Interacts with FCN1; may regulate monocyte activation by FCN1. The cofactor is Ca(2+). In terms of tissue distribution, found in plasma.

It localises to the secreted. Displays several functions associated with host defense: it promotes agglutination, bacterial capsular swelling, phagocytosis and complement fixation through its calcium-dependent binding to phosphorylcholine. Can interact with DNA and histones and may scavenge nuclear material released from damaged circulating cells. In Mesocricetus auratus (Golden hamster), this protein is C-reactive protein (CRP).